The following is a 394-amino-acid chain: Argininosuccinate synthase (394 aa).

8–16 (AYSGGLDTS) contributes to the ATP binding site. L-citrulline is bound by residues tyrosine 86 and serine 91. Residue glycine 116 coordinates ATP. Threonine 118, asparagine 122, and aspartate 123 together coordinate L-aspartate. Position 122 (asparagine 122) interacts with L-citrulline. Positions 126, 172, 181, 257, and 269 each coordinate L-citrulline.

Belongs to the argininosuccinate synthase family. Type 1 subfamily. In terms of assembly, homotetramer.

It is found in the cytoplasm. It catalyses the reaction L-citrulline + L-aspartate + ATP = 2-(N(omega)-L-arginino)succinate + AMP + diphosphate + H(+). It participates in amino-acid biosynthesis; L-arginine biosynthesis; L-arginine from L-ornithine and carbamoyl phosphate: step 2/3. In Methanosarcina acetivorans (strain ATCC 35395 / DSM 2834 / JCM 12185 / C2A), this protein is Argininosuccinate synthase.